Consider the following 456-residue polypeptide: MGRPIVAIIGRPNVGKSTLVNRLCGSREAIVDDQPGVTRDRTYQDAFWADREFKVVDTGGLVFDDESEFLPEIRQQAKLALSEASVALIVVDGQEGVTTADKEIASWLRHCECPTLVAVNKCESPEQGLAMAADFWSLGLGEPYPVSAIHGSGTGELLDQVILLLPSKESSEEEDEPIQLAIIGRPNVGKSSLLNSICGETRAIVSSIRGTTRDTIDTLLKREQQAWKLIDTAGIRRRRSVSYGPEYFGINRSLKAIERSDVCLLVIDALDGVTEQDQRLAGRIEQEGKACLVVVNKWDAVEKDTYTMPLMEKELRSKLYFLDWADMLFTSALTGQRVQLIFNLASLAVEQHRRRVSTSVVNEVLSEALTWRSPPTTRGGRQGRLYYGTQVSTQPPSFSLFVNEPKLFGDSYRRYIERQLREGLGFEGTPLKLFWRGKQQRAAQKDLARQKENLSK.

EngA-type G domains follow at residues 4-169 (PIVA…PSKE) and 178-353 (IQLA…EQHR). GTP contacts are provided by residues 10 to 17 (GRPNVGKS), 57 to 61 (DTGGL), 120 to 123 (NKCE), 184 to 191 (GRPNVGKS), 231 to 235 (DTAGI), and 296 to 299 (NKWD). Residues 354–439 (RRVSTSVVNE…PLKLFWRGKQ (86 aa)) enclose the KH-like domain.

It belongs to the TRAFAC class TrmE-Era-EngA-EngB-Septin-like GTPase superfamily. EngA (Der) GTPase family. As to quaternary structure, associates with the 50S ribosomal subunit.

GTPase that plays an essential role in the late steps of ribosome biogenesis. The sequence is that of GTPase Der from Prochlorococcus marinus (strain MIT 9211).